Here is a 252-residue protein sequence, read N- to C-terminus: tRNA pseudouridine synthase A (252 aa).

The active-site Nucleophile is Asp52. Tyr110 contacts substrate.

Belongs to the tRNA pseudouridine synthase TruA family. Homodimer.

The enzyme catalyses uridine(38/39/40) in tRNA = pseudouridine(38/39/40) in tRNA. Formation of pseudouridine at positions 38, 39 and 40 in the anticodon stem and loop of transfer RNAs. The chain is tRNA pseudouridine synthase A from Syntrophotalea carbinolica (strain DSM 2380 / NBRC 103641 / GraBd1) (Pelobacter carbinolicus).